Here is a 345-residue protein sequence, read N- to C-terminus: Phosphate acyltransferase (345 aa).

This sequence belongs to the PlsX family. In terms of assembly, homodimer. Probably interacts with PlsY.

The protein localises to the cytoplasm. It catalyses the reaction a fatty acyl-[ACP] + phosphate = an acyl phosphate + holo-[ACP]. It functions in the pathway lipid metabolism; phospholipid metabolism. Its function is as follows. Catalyzes the reversible formation of acyl-phosphate (acyl-PO(4)) from acyl-[acyl-carrier-protein] (acyl-ACP). This enzyme utilizes acyl-ACP as fatty acyl donor, but not acyl-CoA. This chain is Phosphate acyltransferase, found in Proteus mirabilis (strain HI4320).